A 306-amino-acid chain; its full sequence is Acetaldehyde dehydrogenase (306 aa).

Residue Cys131 is the Acyl-thioester intermediate of the active site. NAD(+) contacts are provided by residues Ser162–Asn170 and Asn273.

It belongs to the acetaldehyde dehydrogenase family.

The enzyme catalyses acetaldehyde + NAD(+) + CoA = acetyl-CoA + NADH + H(+). This is Acetaldehyde dehydrogenase from Albidiferax ferrireducens (strain ATCC BAA-621 / DSM 15236 / T118) (Rhodoferax ferrireducens).